We begin with the raw amino-acid sequence, 299 residues long: Diaminopimelate epimerase (299 aa).

Substrate is bound by residues Asn15, Gln47, and Asn67. The active-site Proton donor is Cys76. Residues Gly77–Asn78, Asn163, Asn197, and Glu215–Arg216 contribute to the substrate site. Cys224 acts as the Proton acceptor in catalysis. Gly225 to Ser226 serves as a coordination point for substrate.

This sequence belongs to the diaminopimelate epimerase family. Homodimer.

It localises to the cytoplasm. It carries out the reaction (2S,6S)-2,6-diaminopimelate = meso-2,6-diaminopimelate. Its pathway is amino-acid biosynthesis; L-lysine biosynthesis via DAP pathway; DL-2,6-diaminopimelate from LL-2,6-diaminopimelate: step 1/1. Catalyzes the stereoinversion of LL-2,6-diaminopimelate (L,L-DAP) to meso-diaminopimelate (meso-DAP), a precursor of L-lysine and an essential component of the bacterial peptidoglycan. This chain is Diaminopimelate epimerase, found in Agrobacterium fabrum (strain C58 / ATCC 33970) (Agrobacterium tumefaciens (strain C58)).